The following is a 172-amino-acid chain: Protein GrpE (172 aa).

A compositionally biased stretch (low complexity) spans 1-11 (MSEENNSQNSN). Positions 1–22 (MSEENNSQNSNPPNPENGEIAS) are disordered.

This sequence belongs to the GrpE family. Homodimer.

It localises to the cytoplasm. Participates actively in the response to hyperosmotic and heat shock by preventing the aggregation of stress-denatured proteins, in association with DnaK and GrpE. It is the nucleotide exchange factor for DnaK and may function as a thermosensor. Unfolded proteins bind initially to DnaJ; upon interaction with the DnaJ-bound protein, DnaK hydrolyzes its bound ATP, resulting in the formation of a stable complex. GrpE releases ADP from DnaK; ATP binding to DnaK triggers the release of the substrate protein, thus completing the reaction cycle. Several rounds of ATP-dependent interactions between DnaJ, DnaK and GrpE are required for fully efficient folding. The protein is Protein GrpE of Bdellovibrio bacteriovorus (strain ATCC 15356 / DSM 50701 / NCIMB 9529 / HD100).